The chain runs to 338 residues: D-erythrose-4-phosphate dehydrogenase (338 aa).

11–12 is an NAD(+) binding site; it reads RI. Substrate contacts are provided by residues 153 to 155, arginine 199, 212 to 213, and arginine 235; these read SCT and TK. The active-site Nucleophile is cysteine 154. Asparagine 317 is an NAD(+) binding site.

The protein belongs to the glyceraldehyde-3-phosphate dehydrogenase family. Epd subfamily. As to quaternary structure, homotetramer.

The protein localises to the cytoplasm. The catalysed reaction is D-erythrose 4-phosphate + NAD(+) + H2O = 4-phospho-D-erythronate + NADH + 2 H(+). Its pathway is cofactor biosynthesis; pyridoxine 5'-phosphate biosynthesis; pyridoxine 5'-phosphate from D-erythrose 4-phosphate: step 1/5. In terms of biological role, catalyzes the NAD-dependent conversion of D-erythrose 4-phosphate to 4-phosphoerythronate. The chain is D-erythrose-4-phosphate dehydrogenase from Shewanella sp. (strain MR-4).